The following is a 185-amino-acid chain: uncharacterized protein (185 aa).

4 helical membrane-spanning segments follow: residues 5–25 (SFLI…RIWL), 63–83 (LATV…LILI), 97–117 (FLGL…VLLI), and 149–169 (IIPA…GLQF).

It belongs to the YggT family.

It localises to the cell membrane. This is an uncharacterized protein from Vibrio alginolyticus.